The chain runs to 95 residues: Aspartyl/glutamyl-tRNA(Asn/Gln) amidotransferase subunit C (95 aa).

This sequence belongs to the GatC family. As to quaternary structure, heterotrimer of A, B and C subunits.

The enzyme catalyses L-glutamyl-tRNA(Gln) + L-glutamine + ATP + H2O = L-glutaminyl-tRNA(Gln) + L-glutamate + ADP + phosphate + H(+). It carries out the reaction L-aspartyl-tRNA(Asn) + L-glutamine + ATP + H2O = L-asparaginyl-tRNA(Asn) + L-glutamate + ADP + phosphate + 2 H(+). In terms of biological role, allows the formation of correctly charged Asn-tRNA(Asn) or Gln-tRNA(Gln) through the transamidation of misacylated Asp-tRNA(Asn) or Glu-tRNA(Gln) in organisms which lack either or both of asparaginyl-tRNA or glutaminyl-tRNA synthetases. The reaction takes place in the presence of glutamine and ATP through an activated phospho-Asp-tRNA(Asn) or phospho-Glu-tRNA(Gln). This is Aspartyl/glutamyl-tRNA(Asn/Gln) amidotransferase subunit C from Prosthecochloris aestuarii (strain DSM 271 / SK 413).